A 295-amino-acid polypeptide reads, in one-letter code: Sulfotransferase 1 family member D1 (295 aa).

48-53 contributes to the 3'-phosphoadenylyl sulfate binding site; the sequence is KSGTTW. Substrate-binding positions include F81 and 106-108; that span reads KTH. Residue H108 is the Proton acceptor of the active site. Positions 130 and 138 each coordinate 3'-phosphoadenylyl sulfate. F142 is a binding site for substrate. 3'-phosphoadenylyl sulfate is bound by residues Y193, 227-232, and 257-259; these read SSFSVM and RKG.

Belongs to the sulfotransferase 1 family. As to expression, detected in kidney and liver. Detected in kidney collecting duct cells.

It localises to the cytoplasm. Functionally, sulfotransferase with broad substrate specificity that utilizes 3'-phospho-5'-adenylyl sulfate (PAPS) as sulfonate donor to catalyze the sulfate conjugation of catecholamines, such as dopamine, prostaglandins, leukotriene E4, drugs and xenobiotic compounds. Has sulfotransferase activity towards p-nitrophenol, 2-naphthylamine and minoxidil (in vitro). Sulfonation increases the water solubility of most compounds, and therefore their renal excretion, but it can also result in bioactivation to form active metabolites. This chain is Sulfotransferase 1 family member D1 (Sult1d1), found in Mus musculus (Mouse).